The chain runs to 126 residues: MPEPAKSAPAPKKGSKKAVTKAQKIDGKKRKRSRKESYSVYVYKVLKQVHPDTGISSKAMGIMNSFVNDIFERIAGEASRLAHYNKRSTITSREIQTAVRLLLPGELAKHAVSEGTKAVTKYTSAK.

The span at 1-12 shows a compositional bias: low complexity; sequence MPEPAKSAPAPK. Residues 1–36 are disordered; it reads MPEPAKSAPAPKKGSKKAVTKAQKIDGKKRKRSRKE. Residue Pro-2 is modified to N-acetylproline. Glu-3 is modified (ADP-ribosyl glutamic acid). Lys-6 carries the post-translational modification N6-(2-hydroxyisobutyryl)lysine; alternate. Lys-6 is modified (N6-(beta-hydroxybutyryl)lysine; alternate). Lys-6 bears the N6-acetyllysine; alternate mark. At Lys-6 the chain carries N6-butyryllysine; alternate. Lys-6 carries the N6-crotonyllysine; alternate modification. At Lys-6 the chain carries N6-lactoyllysine; alternate. Lys-6 is covalently cross-linked (Glycyl lysine isopeptide (Lys-Gly) (interchain with G-Cter in SUMO2); alternate). Position 7 is an ADP-ribosylserine (Ser-7). Lys-12 is subject to N6-(beta-hydroxybutyryl)lysine; alternate. Residues Lys-12 and Lys-13 each carry the N6-acetyllysine; alternate modification. 2 positions are modified to N6-crotonyllysine; alternate: Lys-12 and Lys-13. Position 12 is an N6-lactoyllysine; alternate (Lys-12). The residue at position 13 (Lys-13) is an N6-(2-hydroxyisobutyryl)lysine; alternate. A Phosphoserine; by STK4/MST1 modification is found at Ser-15. N6-acetyllysine; alternate occurs at positions 16, 17, 21, and 24. An N6-crotonyllysine; alternate mark is found at Lys-16, Lys-17, Lys-21, Lys-24, and Lys-35. N6-lactoyllysine; alternate is present on residues Lys-16, Lys-17, Lys-21, and Lys-24. The residue at position 17 (Lys-17) is an N6-glutaryllysine; alternate. N6-(2-hydroxyisobutyryl)lysine; alternate occurs at positions 21, 24, and 35. Lys-21 is modified (N6-(beta-hydroxybutyryl)lysine; alternate). Position 21 is an N6-butyryllysine; alternate (Lys-21). Residue Lys-21 forms a Glycyl lysine isopeptide (Lys-Gly) (interchain with G-Cter in SUMO2); alternate linkage. The residue at position 35 (Lys-35) is an N6-(beta-hydroxybutyryl)lysine; alternate. Lys-35 is modified (N6-glutaryllysine; alternate). An N6-succinyllysine; alternate modification is found at Lys-35. Residue Lys-35 forms a Glycyl lysine isopeptide (Lys-Gly) (interchain with G-Cter in ubiquitin); alternate linkage. Residue Glu-36 is modified to PolyADP-ribosyl glutamic acid. Ser-37 is subject to Phosphoserine; by AMPK. An N6-(2-hydroxyisobutyryl)lysine; alternate mark is found at Lys-44, Lys-47, and Lys-58. At Lys-44 the chain carries N6-lactoyllysine; alternate. Lys-44 and Lys-47 each carry N6-glutaryllysine; alternate. Lys-47 is subject to N6-methyllysine; alternate. Lys-58 carries the post-translational modification N6,N6-dimethyllysine; alternate. A Dimethylated arginine modification is found at Arg-80. Lys-86 is modified (N6-(2-hydroxyisobutyryl)lysine; alternate). Lys-86 is modified (N6-acetyllysine; alternate). Position 86 is an N6-lactoyllysine; alternate (Lys-86). Lys-86 carries the N6,N6,N6-trimethyllysine; alternate modification. An omega-N-methylarginine mark is found at Arg-87 and Arg-93. At Lys-109 the chain carries N6-(2-hydroxyisobutyryl)lysine; alternate. N6-lactoyllysine; alternate is present on Lys-109. Residue Lys-109 is modified to N6-glutaryllysine; alternate. Lys-109 bears the N6-methyllysine; alternate mark. Residue Ser-113 is glycosylated (O-linked (GlcNAc) serine). Thr-116 is subject to Phosphothreonine. N6-(2-hydroxyisobutyryl)lysine; alternate is present on residues Lys-117 and Lys-121. At Lys-117 the chain carries N6-(beta-hydroxybutyryl)lysine; alternate. N6-lactoyllysine; alternate is present on residues Lys-117 and Lys-121. 2 positions are modified to N6-glutaryllysine; alternate: Lys-117 and Lys-121. N6-succinyllysine; alternate occurs at positions 117 and 121. Residue Lys-117 is modified to N6-methylated lysine; alternate. Lys-121 is covalently cross-linked (Glycyl lysine isopeptide (Lys-Gly) (interchain with G-Cter in ubiquitin); alternate).

It belongs to the histone H2B family. The nucleosome is a histone octamer containing two molecules each of H2A, H2B, H3 and H4 assembled in one H3-H4 heterotetramer and two H2A-H2B heterodimers. The octamer wraps approximately 147 bp of DNA. Post-translationally, monoubiquitination at Lys-35 (H2BK34Ub) by the MSL1/MSL2 dimer is required for histone H3 'Lys-4' (H3K4me) and 'Lys-79' (H3K79me) methylation and transcription activation at specific gene loci, such as HOXA9 and MEIS1 loci. Similarly, monoubiquitination at Lys-121 (H2BK120Ub) by the RNF20/40 complex gives a specific tag for epigenetic transcriptional activation and is also prerequisite for histone H3 'Lys-4' and 'Lys-79' methylation. It also functions cooperatively with the FACT dimer to stimulate elongation by RNA polymerase II. H2BK120Ub also acts as a regulator of mRNA splicing: deubiquitination by USP49 is required for efficient cotranscriptional splicing of a large set of exons. In terms of processing, phosphorylated on Ser-15 (H2BS14ph) by STK4/MST1 during apoptosis; which facilitates apoptotic chromatin condensation. Also phosphorylated on Ser-15 in response to DNA double strand breaks (DSBs), and in correlation with somatic hypermutation and immunoglobulin class-switch recombination. Phosphorylation at Ser-37 (H2BS36ph) by AMPK in response to stress promotes transcription. GlcNAcylation at Ser-113 promotes monoubiquitination of Lys-121. It fluctuates in response to extracellular glucose, and associates with transcribed genes. Post-translationally, ADP-ribosylated by PARP1 or PARP2 on Ser-7 (H2BS6ADPr) in response to DNA damage. H2BS6ADPr promotes recruitment of CHD1L. Mono-ADP-ribosylated on Glu-3 (H2BE2ADPr) by PARP3 in response to single-strand breaks. Poly ADP-ribosylation on Glu-36 (H2BE35ADPr) by PARP1 regulates adipogenesis: it inhibits phosphorylation at Ser-37 (H2BS36ph), thereby blocking expression of pro-adipogenetic genes. In terms of processing, crotonylation (Kcr) is specifically present in male germ cells and marks testis-specific genes in post-meiotic cells, including X-linked genes that escape sex chromosome inactivation in haploid cells. Crotonylation marks active promoters and enhancers and confers resistance to transcriptional repressors. It is also associated with post-meiotically activated genes on autosomes. Lactylated in macrophages by EP300/P300 by using lactoyl-CoA directly derived from endogenous or exogenous lactate, leading to stimulates gene transcription.

It is found in the nucleus. Its subcellular location is the chromosome. In terms of biological role, core component of nucleosome. Nucleosomes wrap and compact DNA into chromatin, limiting DNA accessibility to the cellular machineries which require DNA as a template. Histones thereby play a central role in transcription regulation, DNA repair, DNA replication and chromosomal stability. DNA accessibility is regulated via a complex set of post-translational modifications of histones, also called histone code, and nucleosome remodeling. This Bos taurus (Bovine) protein is Histone H2B type 1-K.